The primary structure comprises 419 residues: Putative nickel insertion protein (419 aa).

The disordered stretch occupies residues 69 to 90; that stretch reads HDPSNHPSQNTHHHHHHHTRHL. Residues 79–88 are compositionally biased toward basic residues; sequence THHHHHHHTR.

The protein belongs to the LarC family.

This Rippkaea orientalis (strain PCC 8801 / RF-1) (Cyanothece sp. (strain PCC 8801)) protein is Putative nickel insertion protein.